A 360-amino-acid chain; its full sequence is Dehydrogenase mokE (360 aa).

50–53 (SDTK) lines the NADP(+) pocket. 134 to 141 (AGISTAGL) is a binding site for substrate. NADP(+) is bound by residues 173–176 (STAT), 196–199 (SPHN), Y214, 261–262 (LN), and T279. Residue 281 to 285 (GPTIF) participates in substrate binding. Residue 350–351 (LS) coordinates NADP(+).

This sequence belongs to the zinc-containing alcohol dehydrogenase family. As to quaternary structure, monomer.

It participates in polyketide biosynthesis; lovastatin biosynthesis. Functionally, dehydrogenase; part of the gene cluster that mediates the biosynthesis of monakolin K, also known as lovastatin, and which acts as a potent competitive inhibitor of HMG-CoA reductase. Monakolin K biosynthesis is performed in two stages. The first stage is catalyzed by the nonaketide synthase mokA, which belongs to type I polyketide synthases and catalyzes the iterative nine-step formation of the polyketide. This PKS stage is completed by the action of dehydrogenase mokE, which catalyzes the NADPH-dependent reduction of the unsaturated tetra-, penta- and heptaketide intermediates that arise during the mokA-mediated biosynthesis of the nonaketide chain and leads to dihydromonacolin L. Covalently bound dihydromonacolin L is released from mokA by the mokD esterase. Conversion of dihydromonacolin L into monacolin L and then monacolin J is subsequently performed with the participation of molecular oxygen and P450 monoogygenase mokC. Finally, mokF performs the conversion of monacoline J to monacoline K through the addition of the side-chain diketide moiety (2R)-2-methylbutanoate produced by the diketide synthase mokB. In Monascus pilosus (Red mold), this protein is Dehydrogenase mokE.